The sequence spans 152 residues: Lipoprotein signal peptidase (152 aa).

Helical transmembrane passes span 55-75 (NKMW…VFYM) and 85-105 (LGIS…DRVF). Catalysis depends on residues Asp-111 and Asp-129. A helical transmembrane segment spans residues 124 to 144 (VFNIADSALCIGVVLIIIQTV).

It belongs to the peptidase A8 family.

The protein resides in the cell membrane. The catalysed reaction is Release of signal peptides from bacterial membrane prolipoproteins. Hydrolyzes -Xaa-Yaa-Zaa-|-(S,diacylglyceryl)Cys-, in which Xaa is hydrophobic (preferably Leu), and Yaa (Ala or Ser) and Zaa (Gly or Ala) have small, neutral side chains.. The protein operates within protein modification; lipoprotein biosynthesis (signal peptide cleavage). This protein specifically catalyzes the removal of signal peptides from prolipoproteins. The polypeptide is Lipoprotein signal peptidase (Bacillus mycoides (strain KBAB4) (Bacillus weihenstephanensis)).